Reading from the N-terminus, the 280-residue chain is Putative pyruvate, phosphate dikinase regulatory protein 1 (280 aa).

Position 152–159 (152–159 (GVSRTSKT)) interacts with ADP.

It belongs to the pyruvate, phosphate/water dikinase regulatory protein family. PDRP subfamily.

The enzyme catalyses N(tele)-phospho-L-histidyl/L-threonyl-[pyruvate, phosphate dikinase] + ADP = N(tele)-phospho-L-histidyl/O-phospho-L-threonyl-[pyruvate, phosphate dikinase] + AMP + H(+). It carries out the reaction N(tele)-phospho-L-histidyl/O-phospho-L-threonyl-[pyruvate, phosphate dikinase] + phosphate + H(+) = N(tele)-phospho-L-histidyl/L-threonyl-[pyruvate, phosphate dikinase] + diphosphate. Functionally, bifunctional serine/threonine kinase and phosphorylase involved in the regulation of the pyruvate, phosphate dikinase (PPDK) by catalyzing its phosphorylation/dephosphorylation. The chain is Putative pyruvate, phosphate dikinase regulatory protein 1 from Latilactobacillus sakei subsp. sakei (strain 23K) (Lactobacillus sakei subsp. sakei).